The chain runs to 121 residues: Large ribosomal subunit protein bL12 (121 aa).

This sequence belongs to the bacterial ribosomal protein bL12 family. As to quaternary structure, homodimer. Part of the ribosomal stalk of the 50S ribosomal subunit. Forms a multimeric L10(L12)X complex, where L10 forms an elongated spine to which 2 to 4 L12 dimers bind in a sequential fashion. Binds GTP-bound translation factors.

Its function is as follows. Forms part of the ribosomal stalk which helps the ribosome interact with GTP-bound translation factors. Is thus essential for accurate translation. The polypeptide is Large ribosomal subunit protein bL12 (Lactobacillus delbrueckii subsp. bulgaricus (strain ATCC BAA-365 / Lb-18)).